Consider the following 607-residue polypeptide: Thymidine kinase (607 aa).

Disordered stretches follow at residues 1 to 160 (MAGF…ADST) and 180 to 215 (DDKS…PSGL). The segment covering 17-32 (KCQEDESPENERHENF) has biased composition (basic and acidic residues). Polar residues-rich tracts occupy residues 88 to 106 (AAVT…TSCP), 148 to 160 (RKTS…ADST), and 194 to 203 (RRPSSHSALK). 291 to 298 (GAPGVGKT) provides a ligand contact to ATP. E317 serves as the catalytic Proton acceptor. Residue Q355 participates in substrate binding. R445 is an ATP binding site. R451 serves as a coordination point for substrate.

Belongs to the herpesviridae thymidine kinase family. As to quaternary structure, homodimer.

It localises to the virion tegument. Its subcellular location is the host nucleus. It carries out the reaction thymidine + ATP = dTMP + ADP + H(+). In terms of biological role, catalyzes the transfer of the gamma-phospho group of ATP to thymidine to generate dTMP in the salvage pathway of pyrimidine synthesis. The dTMP serves as a substrate for DNA polymerase during viral DNA replication. Allows the virus to be reactivated and to grow in non-proliferative cells lacking a high concentration of phosphorylated nucleic acid precursors. This chain is Thymidine kinase, found in Epstein-Barr virus (strain GD1) (HHV-4).